An 875-amino-acid polypeptide reads, in one-letter code: Valine--tRNA ligase (875 aa).

The short motif at 45 to 55 (PNVTGVLHMGH) is the 'HIGH' region element. A 'KMSKS' region motif is present at residues 524 to 528 (KMSKS). Lys-527 contacts ATP. A coiled-coil region spans residues 803–837 (VKLLIDKTKELIRLEKQLEKYKMLKISVSKKLENE).

The protein belongs to the class-I aminoacyl-tRNA synthetase family. ValS type 1 subfamily. In terms of assembly, monomer.

The protein localises to the cytoplasm. It catalyses the reaction tRNA(Val) + L-valine + ATP = L-valyl-tRNA(Val) + AMP + diphosphate. In terms of biological role, catalyzes the attachment of valine to tRNA(Val). As ValRS can inadvertently accommodate and process structurally similar amino acids such as threonine, to avoid such errors, it has a 'posttransfer' editing activity that hydrolyzes mischarged Thr-tRNA(Val) in a tRNA-dependent manner. This is Valine--tRNA ligase from Borrelia garinii subsp. bavariensis (strain ATCC BAA-2496 / DSM 23469 / PBi) (Borreliella bavariensis).